The chain runs to 271 residues: Large ribosomal subunit protein uL18 (271 aa).

The segment covering 245–264 (IRENPCPPKKERTKPADAKR) has biased composition (basic and acidic residues). A disordered region spans residues 245–271 (IRENPCPPKKERTKPADAKRWSPQAHL).

Belongs to the universal ribosomal protein uL18 family. In terms of assembly, component of the large ribosomal subunit (LSU).

It is found in the cytoplasm. Its subcellular location is the nucleus. Its function is as follows. Component of the ribosome, a large ribonucleoprotein complex responsible for the synthesis of proteins in the cell. The small ribosomal subunit (SSU) binds messenger RNAs (mRNAs) and translates the encoded message by selecting cognate aminoacyl-transfer RNA (tRNA) molecules. The large subunit (LSU) contains the ribosomal catalytic site termed the peptidyl transferase center (PTC), which catalyzes the formation of peptide bonds, thereby polymerizing the amino acids delivered by tRNAs into a polypeptide chain. The nascent polypeptides leave the ribosome through a tunnel in the LSU and interact with protein factors that function in enzymatic processing, targeting, and the membrane insertion of nascent chains at the exit of the ribosomal tunnel. This chain is Large ribosomal subunit protein uL18 (RPL5), found in Dunaliella salina (Green alga).